We begin with the raw amino-acid sequence, 432 residues long: Adenylosuccinate synthetase (432 aa).

Residues 13-19 (GDEGKGK) and 41-43 (GHT) each bind GTP. Asp14 acts as the Proton acceptor in catalysis. Mg(2+) is bound by residues Asp14 and Gly41. IMP-binding positions include 14 to 17 (DEGK), 39 to 42 (NAGH), Thr131, Arg145, Gln226, Thr241, and Arg305. His42 acts as the Proton donor in catalysis. 301–307 (SVTGRAR) provides a ligand contact to substrate. Residues Arg307, 333 to 335 (KLD), and 416 to 418 (STG) contribute to the GTP site.

Belongs to the adenylosuccinate synthetase family. In terms of assembly, homodimer. Mg(2+) is required as a cofactor.

It localises to the cytoplasm. The enzyme catalyses IMP + L-aspartate + GTP = N(6)-(1,2-dicarboxyethyl)-AMP + GDP + phosphate + 2 H(+). It functions in the pathway purine metabolism; AMP biosynthesis via de novo pathway; AMP from IMP: step 1/2. Its function is as follows. Plays an important role in the de novo pathway of purine nucleotide biosynthesis. Catalyzes the first committed step in the biosynthesis of AMP from IMP. In Neisseria gonorrhoeae (strain ATCC 700825 / FA 1090), this protein is Adenylosuccinate synthetase.